The chain runs to 403 residues: Chorismate synthase (403 aa).

NADP(+)-binding residues include arginine 40 and arginine 46. Residues 140-142 (RSS), 261-262 (QA), glycine 305, 320-324 (KPIST), and arginine 346 each bind FMN.

It belongs to the chorismate synthase family. Homotetramer. Requires FMNH2 as cofactor.

The catalysed reaction is 5-O-(1-carboxyvinyl)-3-phosphoshikimate = chorismate + phosphate. It functions in the pathway metabolic intermediate biosynthesis; chorismate biosynthesis; chorismate from D-erythrose 4-phosphate and phosphoenolpyruvate: step 7/7. Its function is as follows. Catalyzes the anti-1,4-elimination of the C-3 phosphate and the C-6 proR hydrogen from 5-enolpyruvylshikimate-3-phosphate (EPSP) to yield chorismate, which is the branch point compound that serves as the starting substrate for the three terminal pathways of aromatic amino acid biosynthesis. This reaction introduces a second double bond into the aromatic ring system. The protein is Chorismate synthase of Corynebacterium diphtheriae (strain ATCC 700971 / NCTC 13129 / Biotype gravis).